The primary structure comprises 112 residues: Transmembrane protein 14 homolog (112 aa).

Residues Val3 to Ala23 traverse the membrane as a helical segment.

The protein belongs to the TMEM14 family.

Its subcellular location is the membrane. The protein is Transmembrane protein 14 homolog of Drosophila melanogaster (Fruit fly).